Reading from the N-terminus, the 433-residue chain is MLNFISKPVGCLKGEITVPGDKSISHRSIIFGAIAIGTSVIDGFLDGEDCIATLKAFQSMGVRIEGPDKQRVIIHGVGKYGLKQPQNIIDCGNSGTSMRLLAGLLAAQQFDSQLTGDESLLKRPMLRISRPLSQMGADVTTQDGKPPIVIKGGKKLNGVHYVMPEASAQVKSCLLLAGMYAEGQTKITENAVSRDHTERMLRTFSYPVQIQDGTIVIDRNGECHGTRLNIPGDISSAAFFIVAASITPDSDVLIRNVGINPTRTGIIHILTEMGADIRILNQRAYGEEPVADLHIRYSQLKGIDIPVSMVPLAIDEFPVIFIAAACAQGKTTLHGAKELRLKESDRIGAMVDGLNQLGVHAEGFDDGILIEGGSIQGGEVNSRGDHRIAMSFAIAGAVASAPVTIKNCANVATSFPSFVTTANMLHFQIEEYS.

The 3-phosphoshikimate site is built by Lys-22, Ser-23, and Arg-27. A phosphoenolpyruvate-binding site is contributed by Lys-22. Phosphoenolpyruvate-binding residues include Gly-95 and Arg-123. 3-phosphoshikimate-binding residues include Ser-167, Gln-169, Asp-315, and Lys-342. Position 169 (Gln-169) interacts with phosphoenolpyruvate. Asp-315 (proton acceptor) is an active-site residue. Phosphoenolpyruvate-binding residues include Arg-346 and Arg-387.

Belongs to the EPSP synthase family. Monomer.

Its subcellular location is the cytoplasm. It carries out the reaction 3-phosphoshikimate + phosphoenolpyruvate = 5-O-(1-carboxyvinyl)-3-phosphoshikimate + phosphate. It participates in metabolic intermediate biosynthesis; chorismate biosynthesis; chorismate from D-erythrose 4-phosphate and phosphoenolpyruvate: step 6/7. In terms of biological role, catalyzes the transfer of the enolpyruvyl moiety of phosphoenolpyruvate (PEP) to the 5-hydroxyl of shikimate-3-phosphate (S3P) to produce enolpyruvyl shikimate-3-phosphate and inorganic phosphate. The chain is 3-phosphoshikimate 1-carboxyvinyltransferase from Legionella pneumophila (strain Lens).